The sequence spans 93 residues: MQQEALGMVETKGLTAAIEAADAMVKSANVMLVGYEKIGSGLVTVIVRGDVGAVKAATDAGAAAARNVGEVKAVHVIPRPHTDVEKILPKGIS.

The region spanning 5–89 is the BMC domain; that stretch reads ALGMVETKGL…PHTDVEKILP (85 aa).

It belongs to the bacterial microcompartments protein family. In terms of assembly, homohexamer with a central pore; Lys-26 and Arg-79 interactions are very important for hexamer symmetry. The hexamers pack against each other in arrays. Interacts individually with shell proteins PduB, PduB', PduJ, PduK, PduN and PduU. Modeling suggests PduC, PduD, PduE, PduL and PduP interact with a cleft formed by the C-terminal segments of 2 adjacent PduA subunits (on the BMC luminal side) in the hexamer.

It localises to the bacterial microcompartment. It participates in polyol metabolism; 1,2-propanediol degradation. In terms of biological role, one of the major shell proteins of the bacterial microcompartment (BMC) dedicated to 1,2-propanediol (1,2-PD) degradation, probably important for metabolite diffusion into and out of the BMC. Overexpression of a C-terminally mutated form (PduA*) makes thin parallel filaments with a honeycomb-like assembly in cross-section that probably form nanotubes. The filaments interfere with septation. PduA is probably the hub for binding multiple enzymes to the interior of the BMC. At least one of PduA or PduJ is required for BMC assembly; it must be encoded as the first gene in the pdu operon. Functionally, expression of a cosmid containing the full 21-gene pdu operon in E.coli allows E.coli to grow on 1,2-PD with the appearance of BMCs in its cytoplasm. Overexpression of this protein leads to aberrant intracellular filaments. The 1,2-PD-specific bacterial microcompartment (BMC) concentrates low levels of 1,2-PD catabolic enzymes, concentrates volatile reaction intermediates thus enhancing pathway flux and keeps the level of toxic, mutagenic propionaldehyde low. The chain is Bacterial microcompartment shell protein PduA from Citrobacter freundii.